A 561-amino-acid chain; its full sequence is Methionine--tRNA ligase (561 aa).

Residues 11–21 (PYVNTVPHLGN) carry the 'HIGH' region motif. Residues Cys143, Cys146, Cys156, and Cys159 each coordinate Zn(2+). Lys334 serves as a coordination point for ATP.

Belongs to the class-I aminoacyl-tRNA synthetase family. MetG type 1 subfamily. Requires Zn(2+) as cofactor.

Its subcellular location is the cytoplasm. It catalyses the reaction tRNA(Met) + L-methionine + ATP = L-methionyl-tRNA(Met) + AMP + diphosphate. Its function is as follows. Is required not only for elongation of protein synthesis but also for the initiation of all mRNA translation through initiator tRNA(fMet) aminoacylation. The protein is Methionine--tRNA ligase of Ignicoccus hospitalis (strain KIN4/I / DSM 18386 / JCM 14125).